A 718-amino-acid chain; its full sequence is Cyclomaltodextrin glucanotransferase (718 aa).

A signal peptide spans Met1 to Ala34. The segment at Asp35–Pro172 is A1. Ca(2+) is bound by residues Asp61, Asn63, Asn66, and Asn67. Cysteines 77 and 84 form a disulfide. Residues Gly85 and Asp87 each coordinate Ca(2+). Tyr134–Trp135 serves as a coordination point for substrate. Ca(2+) is bound at residue Asn173. The segment at Asn173–His236 is b. His174 is a binding site for substrate. Ile224 serves as a coordination point for Ca(2+). Asn227 to Asp230 serves as a coordination point for substrate. Asp233 contributes to the Ca(2+) binding site. Residues Asn237–Tyr440 are A2. Arg261 contacts substrate. Asp263 functions as the Nucleophile in the catalytic mechanism. Lys266–His267 serves as a coordination point for substrate. His267 is a binding site for Ca(2+). Residue Glu291 is the Proton donor of the active site. Substrate is bound by residues His361, Asp405, and Arg409. The interval Gly441–Ser528 is c. The segment at Glu529 to Leu614 is d. The 81-residue stretch at Pro532 to Thr612 folds into the IPT/TIG domain. One can recognise a CBM20 domain in the interval Ile613–Gln718. An e region spans residues Ser615–Gln718.

This sequence belongs to the glycosyl hydrolase 13 family. As to quaternary structure, monomer. It depends on Ca(2+) as a cofactor.

It localises to the secreted. It catalyses the reaction Cyclizes part of a (1-&gt;4)-alpha-D-glucan chain by formation of a (1-&gt;4)-alpha-D-glucosidic bond.. In Bacillus licheniformis, this protein is Cyclomaltodextrin glucanotransferase (cgtA).